Reading from the N-terminus, the 271-residue chain is Phosphatidylglycerol--prolipoprotein diacylglyceryl transferase (271 aa).

7 consecutive transmembrane segments (helical) span residues 18-38, 60-80, 103-123, 137-157, 181-201, 209-229, and 236-256; these read IFGL…LVAL, YFIW…ILIY, FVGI…IATY, LDLV…GNFL, PSQL…LLLI, GELI…CEFF, and IGFV…MFLL. Residue Arg-152 coordinates a 1,2-diacyl-sn-glycero-3-phospho-(1'-sn-glycerol).

Belongs to the Lgt family.

The protein localises to the cell inner membrane. It catalyses the reaction L-cysteinyl-[prolipoprotein] + a 1,2-diacyl-sn-glycero-3-phospho-(1'-sn-glycerol) = an S-1,2-diacyl-sn-glyceryl-L-cysteinyl-[prolipoprotein] + sn-glycerol 1-phosphate + H(+). It functions in the pathway protein modification; lipoprotein biosynthesis (diacylglyceryl transfer). Its function is as follows. Catalyzes the transfer of the diacylglyceryl group from phosphatidylglycerol to the sulfhydryl group of the N-terminal cysteine of a prolipoprotein, the first step in the formation of mature lipoproteins. The chain is Phosphatidylglycerol--prolipoprotein diacylglyceryl transferase from Campylobacter lari (strain RM2100 / D67 / ATCC BAA-1060).